Consider the following 277-residue polypeptide: Undecaprenyl-diphosphatase (277 aa).

Transmembrane regions (helical) follow at residues 47 to 67 (FNII…RGKI), 85 to 105 (ANLL…ADLI), 108 to 128 (WLFN…VMLW), 187 to 207 (FSFF…GYVY), 218 to 238 (VFAV…RALL), and 249 to 269 (FAWY…FHLI).

Belongs to the UppP family.

The protein localises to the cell inner membrane. It catalyses the reaction di-trans,octa-cis-undecaprenyl diphosphate + H2O = di-trans,octa-cis-undecaprenyl phosphate + phosphate + H(+). Functionally, catalyzes the dephosphorylation of undecaprenyl diphosphate (UPP). Confers resistance to bacitracin. The sequence is that of Undecaprenyl-diphosphatase from Pseudomonas aeruginosa (strain ATCC 15692 / DSM 22644 / CIP 104116 / JCM 14847 / LMG 12228 / 1C / PRS 101 / PAO1).